The primary structure comprises 203 residues: Outer-membrane lipoprotein carrier protein (203 aa).

Positions 1–21 are cleaved as a signal peptide; the sequence is MKKWLAISCLIAGVTSTAVYA.

This sequence belongs to the LolA family. As to quaternary structure, monomer.

Its subcellular location is the periplasm. Participates in the translocation of lipoproteins from the inner membrane to the outer membrane. Only forms a complex with a lipoprotein if the residue after the N-terminal Cys is not an aspartate (The Asp acts as a targeting signal to indicate that the lipoprotein should stay in the inner membrane). The chain is Outer-membrane lipoprotein carrier protein from Pectobacterium atrosepticum (strain SCRI 1043 / ATCC BAA-672) (Erwinia carotovora subsp. atroseptica).